A 102-amino-acid polypeptide reads, in one-letter code: Small ribosomal subunit protein uS10 (102 aa).

It belongs to the universal ribosomal protein uS10 family. As to quaternary structure, part of the 30S ribosomal subunit.

In terms of biological role, involved in the binding of tRNA to the ribosomes. The polypeptide is Small ribosomal subunit protein uS10 (Mycoplasma mobile (strain ATCC 43663 / 163K / NCTC 11711) (Mesomycoplasma mobile)).